Consider the following 535-residue polypeptide: MGNACRGSFGGKTFQGYPQPQDHSESNSNPKHNSDSPKPKKEQQPLVTMNRTSTNQSYYVLGHKTPNIRDLYTLGRKLGQGQFGTTYLCTELSSGIDYACKSIAKRKLISKEDVEDVRREIQIMHHLAGHKNIVSIKGAYEDPLYVHIVMELCGGGELFDRIIQRGHYTERKAADLTKIIVGVVEACHSLGVMHRDLKPENFLLVNKDDDFSLKAIDFGLSVFFKPGQIFTDVVGSPYYVAPEVLLKHYGPEADVWTAGVILYILLSGVPPFWAETQQGIFDAVLKGHIDFDSDPWPLLSESAKDLIRKMLCMRPSERLTAHEVLCHPWICENGVAPDRALDPAVLSRLKHFSAMNKLKKMALRVIAESLSEEEIAGLKEMFKAMDTDNSGAITFDELKAGLRKYGSTLKDIEIRELMDAADVDNSGTIDYGEFIAATIHLNKLDREEHLMAAFQYFDKDGSGYITVDELQQACADHNITDVFFEDIIREVDQDNDGRIDYGEFVAMMQKGNPCIGRRTMRNSLNFSMRDAPGAH.

The tract at residues 1–46 (MGNACRGSFGGKTFQGYPQPQDHSESNSNPKHNSDSPKPKKEQQPL) is disordered. Gly2 carries the N-myristoyl glycine lipid modification. The S-palmitoyl cysteine moiety is linked to residue Cys5. Over residues 32–43 (HNSDSPKPKKEQ) the composition is skewed to basic and acidic residues. The Protein kinase domain occupies 72–330 (YTLGRKLGQG…AHEVLCHPWI (259 aa)). ATP contacts are provided by residues 78–86 (LGQGQFGTT) and Lys101. The active-site Proton acceptor is the Asp196. The autoinhibitory domain stretch occupies residues 336 to 366 (APDRALDPAVLSRLKHFSAMNKLKKMALRVI). EF-hand domains lie at 373 to 408 (EEIAGLKEMFKAMDTDNSGAITFDELKAGLRKYGST), 409 to 444 (LKDIEIRELMDAADVDNSGTIDYGEFIAATIHLNKL), 445 to 480 (DREEHLMAAFQYFDKDGSGYITVDELQQACADHNIT), and 484 to 514 (FEDIIREVDQDNDGRIDYGEFVAMMQKGNPC). Asp386, Asp388, Ser390, Glu397, Asp422, Asp424, Ser426, Thr428, Glu433, Asp458, Asp460, Ser462, Tyr464, Glu469, Asp492, Asp494, Asp496, Arg498, and Glu503 together coordinate Ca(2+).

The protein belongs to the protein kinase superfamily. Ser/Thr protein kinase family. CDPK subfamily.

It localises to the cell membrane. It catalyses the reaction L-seryl-[protein] + ATP = O-phospho-L-seryl-[protein] + ADP + H(+). It carries out the reaction L-threonyl-[protein] + ATP = O-phospho-L-threonyl-[protein] + ADP + H(+). Its activity is regulated as follows. Activated by calcium. Autophosphorylation may play an important role in the regulation of the kinase activity. In terms of biological role, regulates the production of reactive oxygen species (ROS) by NADPH oxidase. This Solanum tuberosum (Potato) protein is Calcium-dependent protein kinase 5 (CPK5).